We begin with the raw amino-acid sequence, 479 residues long: Probable phosphatidate cytidylyltransferase (479 aa).

The segment covering 1-28 (MRTDNIRNRKEQLKKQEKKDFDSSKDEE) has biased composition (basic and acidic residues). The disordered stretch occupies residues 1 to 71 (MRTDNIRNRK…NNNNNNNNIK (71 aa)). The Cytoplasmic portion of the chain corresponds to 1–108 (MRTDNIRNRK…LAIRSVMGAF (108 aa)). The segment covering 53 to 69 (NKNIINQKTNNNNNNNN) has biased composition (low complexity). Residues 109-129 (MIGFFTIVLSTDHFIVALFVI) traverse the membrane as a helical segment. The Extracellular segment spans residues 130-159 (ALQLLVFKEMIALRYIEAKEKKIPHFRTLN). The chain crosses the membrane as a helical span at residues 160 to 180 (WFFLFTSFFFFYAKPILITLA). The Cytoplasmic segment spans residues 181–192 (NYYPDIFQHFVR). Residues 193 to 213 (YHLWHSFSLYCIGFVLFILTL) traverse the membrane as a helical segment. The Extracellular segment spans residues 214–240 (RKGVYRYQFSQLTWTLMILMMVVVQSN). Residues 241-261 (FLISNIYQGLIWFILPVSIIV) form a helical membrane-spanning segment. The Cytoplasmic segment spans residues 262-293 (CNDIFAYFNGFFLGKKFINRPLMKISPNKTWE). A helical transmembrane segment spans residues 294–314 (GFIGATGWTLLFAYYFCGFLL). Residues 315 to 375 (KYDWIVCPKG…FTYIPIQFHA (61 aa)) lie on the Extracellular side of the membrane. The helical transmembrane segment at 376-396 (LVLALFGSLIAPFGGFFASGI) threads the bilayer. Residues 397–479 (KRAYKVKDFD…IEFTTGTITA (83 aa)) are Cytoplasmic-facing.

This sequence belongs to the CDS family.

It is found in the membrane. It catalyses the reaction a 1,2-diacyl-sn-glycero-3-phosphate + CTP + H(+) = a CDP-1,2-diacyl-sn-glycerol + diphosphate. It participates in phospholipid metabolism; CDP-diacylglycerol biosynthesis; CDP-diacylglycerol from sn-glycerol 3-phosphate: step 3/3. This Dictyostelium discoideum (Social amoeba) protein is Probable phosphatidate cytidylyltransferase (cdsA).